Here is a 606-residue protein sequence, read N- to C-terminus: EPM2A-interacting protein 1 (606 aa).

S147 carries the post-translational modification Phosphoserine.

Interacts with EPM2A.

It is found in the endoplasmic reticulum. The chain is EPM2A-interacting protein 1 (Epm2aip1) from Mus musculus (Mouse).